A 148-amino-acid chain; its full sequence is Aspartate 1-decarboxylase (148 aa).

Catalysis depends on Ser25, which acts as the Schiff-base intermediate with substrate; via pyruvic acid. Ser25 is subject to Pyruvic acid (Ser). Residue Thr57 participates in substrate binding. Catalysis depends on Tyr58, which acts as the Proton donor. 73 to 75 (GAA) contacts substrate.

It belongs to the PanD family. In terms of assembly, heterooctamer of four alpha and four beta subunits. The cofactor is pyruvate. Post-translationally, is synthesized initially as an inactive proenzyme, which is activated by self-cleavage at a specific serine bond to produce a beta-subunit with a hydroxyl group at its C-terminus and an alpha-subunit with a pyruvoyl group at its N-terminus.

It is found in the cytoplasm. The enzyme catalyses L-aspartate + H(+) = beta-alanine + CO2. It participates in cofactor biosynthesis; (R)-pantothenate biosynthesis; beta-alanine from L-aspartate: step 1/1. Its function is as follows. Catalyzes the pyruvoyl-dependent decarboxylation of aspartate to produce beta-alanine. This chain is Aspartate 1-decarboxylase, found in Rhodococcus erythropolis (strain PR4 / NBRC 100887).